Consider the following 453-residue polypeptide: Bifunctional protein GlmU (453 aa).

The interval 1–231 is pyrophosphorylase; that stretch reads MERSSLAVIL…EKELTGCNNR (231 aa). Residues 10-13, lysine 24, glutamine 77, 82-83, 105-107, glycine 143, glutamate 157, asparagine 172, and asparagine 229 each bind UDP-N-acetyl-alpha-D-glucosamine; these read LAAG, GT, and YGD. Aspartate 107 is a binding site for Mg(2+). Asparagine 229 contacts Mg(2+). The tract at residues 232-252 is linker; it reads AELAFIERLWQERRRHELMVD. Positions 253–453 are N-acetyltransferase; the sequence is GVSMIAPETV…AQKEAKKKSS (201 aa). Residues arginine 318 and lysine 336 each contribute to the UDP-N-acetyl-alpha-D-glucosamine site. Histidine 348 functions as the Proton acceptor in the catalytic mechanism. Tyrosine 351 and asparagine 362 together coordinate UDP-N-acetyl-alpha-D-glucosamine. Acetyl-CoA contacts are provided by residues alanine 365, 371-372, serine 390, serine 408, and arginine 425; that span reads NY.

The protein in the N-terminal section; belongs to the N-acetylglucosamine-1-phosphate uridyltransferase family. This sequence in the C-terminal section; belongs to the transferase hexapeptide repeat family. Homotrimer. Mg(2+) serves as cofactor.

Its subcellular location is the cytoplasm. It catalyses the reaction alpha-D-glucosamine 1-phosphate + acetyl-CoA = N-acetyl-alpha-D-glucosamine 1-phosphate + CoA + H(+). The catalysed reaction is N-acetyl-alpha-D-glucosamine 1-phosphate + UTP + H(+) = UDP-N-acetyl-alpha-D-glucosamine + diphosphate. It participates in nucleotide-sugar biosynthesis; UDP-N-acetyl-alpha-D-glucosamine biosynthesis; N-acetyl-alpha-D-glucosamine 1-phosphate from alpha-D-glucosamine 6-phosphate (route II): step 2/2. Its pathway is nucleotide-sugar biosynthesis; UDP-N-acetyl-alpha-D-glucosamine biosynthesis; UDP-N-acetyl-alpha-D-glucosamine from N-acetyl-alpha-D-glucosamine 1-phosphate: step 1/1. It functions in the pathway bacterial outer membrane biogenesis; LPS lipid A biosynthesis. Catalyzes the last two sequential reactions in the de novo biosynthetic pathway for UDP-N-acetylglucosamine (UDP-GlcNAc). The C-terminal domain catalyzes the transfer of acetyl group from acetyl coenzyme A to glucosamine-1-phosphate (GlcN-1-P) to produce N-acetylglucosamine-1-phosphate (GlcNAc-1-P), which is converted into UDP-GlcNAc by the transfer of uridine 5-monophosphate (from uridine 5-triphosphate), a reaction catalyzed by the N-terminal domain. The chain is Bifunctional protein GlmU from Agrobacterium fabrum (strain C58 / ATCC 33970) (Agrobacterium tumefaciens (strain C58)).